The primary structure comprises 224 residues: Phosphoribosylformylglycinamidine synthase subunit PurQ (224 aa).

Positions 4–224 (RIGVVTFPGT…YSALDAVLTG (221 aa)) constitute a Glutamine amidotransferase type-1 domain. Cysteine 87 (nucleophile) is an active-site residue. Active-site residues include histidine 195 and glutamate 197.

As to quaternary structure, part of the FGAM synthase complex composed of 1 PurL, 1 PurQ and 2 PurS subunits.

Its subcellular location is the cytoplasm. The enzyme catalyses N(2)-formyl-N(1)-(5-phospho-beta-D-ribosyl)glycinamide + L-glutamine + ATP + H2O = 2-formamido-N(1)-(5-O-phospho-beta-D-ribosyl)acetamidine + L-glutamate + ADP + phosphate + H(+). It catalyses the reaction L-glutamine + H2O = L-glutamate + NH4(+). The protein operates within purine metabolism; IMP biosynthesis via de novo pathway; 5-amino-1-(5-phospho-D-ribosyl)imidazole from N(2)-formyl-N(1)-(5-phospho-D-ribosyl)glycinamide: step 1/2. Functionally, part of the phosphoribosylformylglycinamidine synthase complex involved in the purines biosynthetic pathway. Catalyzes the ATP-dependent conversion of formylglycinamide ribonucleotide (FGAR) and glutamine to yield formylglycinamidine ribonucleotide (FGAM) and glutamate. The FGAM synthase complex is composed of three subunits. PurQ produces an ammonia molecule by converting glutamine to glutamate. PurL transfers the ammonia molecule to FGAR to form FGAM in an ATP-dependent manner. PurS interacts with PurQ and PurL and is thought to assist in the transfer of the ammonia molecule from PurQ to PurL. The sequence is that of Phosphoribosylformylglycinamidine synthase subunit PurQ from Mycobacterium bovis (strain ATCC BAA-935 / AF2122/97).